A 250-amino-acid polypeptide reads, in one-letter code: 5'/3'-nucleotidase SurE (250 aa).

Positions 8, 9, 39, and 92 each coordinate a divalent metal cation.

It belongs to the SurE nucleotidase family. Requires a divalent metal cation as cofactor.

The protein localises to the cytoplasm. It catalyses the reaction a ribonucleoside 5'-phosphate + H2O = a ribonucleoside + phosphate. It carries out the reaction a ribonucleoside 3'-phosphate + H2O = a ribonucleoside + phosphate. The enzyme catalyses [phosphate](n) + H2O = [phosphate](n-1) + phosphate + H(+). Functionally, nucleotidase with a broad substrate specificity as it can dephosphorylate various ribo- and deoxyribonucleoside 5'-monophosphates and ribonucleoside 3'-monophosphates with highest affinity to 3'-AMP. Also hydrolyzes polyphosphate (exopolyphosphatase activity) with the preference for short-chain-length substrates (P20-25). Might be involved in the regulation of dNTP and NTP pools, and in the turnover of 3'-mononucleotides produced by numerous intracellular RNases (T1, T2, and F) during the degradation of various RNAs. In Wigglesworthia glossinidia brevipalpis, this protein is 5'/3'-nucleotidase SurE.